The sequence spans 226 residues: MGRSRKNFLSLLENDKVGIFCAFDKDYNVFRAKIHNENLFSHLGFKDIEKCVFMDQIHSHKVIIYDENLKNLSCDGLISKEKNIALCVLSADCLPLILYHESGIIAALHSGRKGSFENILKECVDQITMQNSHLDKNKFHLFILPGICAKNYEIDGEILEFAKKEFKEFVQDDKLDLKALVKFQAQNLGIENIKDCGICSFDDESFFSYRRDKTTKRFVSVVYLKD.

Zn(2+) contacts are provided by histidine 58, cysteine 93, and histidine 109.

It belongs to the purine nucleoside phosphorylase YfiH/LACC1 family. Homodimer. Requires Cu(2+) as cofactor. The cofactor is Zn(2+).

It catalyses the reaction adenosine + phosphate = alpha-D-ribose 1-phosphate + adenine. The enzyme catalyses S-methyl-5'-thioadenosine + phosphate = 5-(methylsulfanyl)-alpha-D-ribose 1-phosphate + adenine. It carries out the reaction inosine + phosphate = alpha-D-ribose 1-phosphate + hypoxanthine. The catalysed reaction is adenosine + H2O + H(+) = inosine + NH4(+). Functionally, purine nucleoside enzyme that catalyzes the phosphorolysis of adenosine and inosine nucleosides, yielding D-ribose 1-phosphate and the respective free bases, adenine and hypoxanthine. Also catalyzes the phosphorolysis of S-methyl-5'-thioadenosine into adenine and S-methyl-5-thio-alpha-D-ribose 1-phosphate. Also has adenosine deaminase activity. This chain is Purine nucleoside phosphorylase Cj1217c, found in Campylobacter jejuni subsp. jejuni serotype O:2 (strain ATCC 700819 / NCTC 11168).